The chain runs to 99 residues: DNA-directed RNA polymerase subunit Rpo11 (99 aa).

This sequence belongs to the archaeal Rpo11/eukaryotic RPB11/RPC19 RNA polymerase subunit family. As to quaternary structure, part of the RNA polymerase complex. Forms an Rpo3-Rpo10-Rpo11-Rpo12 complex upon coexpression.

The protein localises to the cytoplasm. The catalysed reaction is RNA(n) + a ribonucleoside 5'-triphosphate = RNA(n+1) + diphosphate. Functionally, DNA-dependent RNA polymerase (RNAP) catalyzes the transcription of DNA into RNA using the four ribonucleoside triphosphates as substrates. This chain is DNA-directed RNA polymerase subunit Rpo11, found in Methanocaldococcus jannaschii (strain ATCC 43067 / DSM 2661 / JAL-1 / JCM 10045 / NBRC 100440) (Methanococcus jannaschii).